The primary structure comprises 509 residues: Probable triacylglyceride transporter ML0556 (509 aa).

13 helical membrane-spanning segments follow: residues 48-68 (RITWIVTMYLLGYIAAMPLLS), 78-98 (LLLQVSLAGFAIGSVMTALAG), 112-132 (IQGVASGALLPITLALGADLW), 146-166 (AAQELGSVLGPLYGIFIVWLF), 171-191 (YVFWINIPLTAIAMLMIQVSL), 203-223 (VDVVGGVLLAIALGLVVIGLY), 232-252 (VLPSYGVPVLVGGIVATVAFA), 272-292 (PFLSALGASVAAGAALMVTLV), 309-329 (AAGLLVWFLIALPIGAVLGGW), 339-359 (MTFVGLLITAGGYWLISHWPV), 381-403 (LLVAGLGLGLVIGPLSSATLRVV), 410-430 (IASAAVVVARMTGMLIGVAAL), and 477-497 (IFMITAIVCVIGALLGLLISS).

It belongs to the major facilitator superfamily.

It is found in the cell inner membrane. In association with lipoprotein LprG probably transports triacylglycerides (TAG) across the inner cell membrane into the periplasm; TAG probably regulates lipid metabolism and growth regulation. May be an efflux transporter and involved in maintaining correct cell wall permeability. Probably required with LprG for normal surface localization of lipoarabinomannan (LAM). This chain is Probable triacylglyceride transporter ML0556, found in Mycobacterium leprae (strain TN).